A 513-amino-acid chain; its full sequence is MEEYEAQLLVVEQALENAADDAQRQDLLALKNNLQELLALTRESGDEAPIDELPQQGDNLDDELQRLKSELNDLEAAGSSQTALDEERQLADLRTKYTAMVGEKCSAPHEHSWGTCYHNALICGVDDEVVMNSEGVLDARLRVLFTNPTHREMLPCSYYLEGECRFDEAKCRFSHGALVTGSSIRKYNPPDFHKLSRSRPVFALLPDRLWHRGRVLCVNFVEQICRVRLDGQDHKERERDFKFEELYPLTTDQDEDDELSSEESNSSMNDNSSDEAESDMDDLEEARRARMVELSLFTFKPTERLGAWEEFTRGIGSKLMEKMGYIHGTGLGSDGRGIVTPVSAQILPQGRSLDACMELREAANGDKDYFSVERKLKRAQRRQRKADEKAYVRESQRVDVFTFLNDSVLGPGESTQQGEQVTKKAKTNELQQHSTKTLNVETVRIADEIRRKQRDMAKVKQSLDRNSGDAQLQKRLQVQMQSHKQELATLQAQERSLSKEQQTRKSKNKMFEF.

The C3H1-type zinc-finger motif lies at 155–178 (PCSYYLEGECRFDEAKCRFSHGAL). Acidic residues predominate over residues 252–261 (DQDEDDELSS). A disordered region spans residues 252-283 (DQDEDDELSSEESNSSMNDNSSDEAESDMDDL). Residues 262 to 271 (EESNSSMNDN) are compositionally biased toward low complexity. Positions 272-283 (SSDEAESDMDDL) are enriched in acidic residues. One can recognise a G-patch domain in the interval 312 to 358 (TRGIGSKLMEKMGYIHGTGLGSDGRGIVTPVSAQILPQGRSLDACME). The segment covering 478–495 (VQMQSHKQELATLQAQER) has biased composition (polar residues). Residues 478–513 (VQMQSHKQELATLQAQERSLSKEQQTRKSKNKMFEF) are disordered. Positions 496 to 513 (SLSKEQQTRKSKNKMFEF) are enriched in basic and acidic residues.

The protein localises to the nucleus. Functionally, transcription repressor. This chain is Zinc finger CCCH-type with G patch domain-containing protein, found in Drosophila melanogaster (Fruit fly).